Reading from the N-terminus, the 468-residue chain is 3-isopropylmalate dehydratase large subunit (468 aa).

3 residues coordinate [4Fe-4S] cluster: Cys-347, Cys-407, and Cys-410.

This sequence belongs to the aconitase/IPM isomerase family. LeuC type 1 subfamily. In terms of assembly, heterodimer of LeuC and LeuD. Requires [4Fe-4S] cluster as cofactor.

It carries out the reaction (2R,3S)-3-isopropylmalate = (2S)-2-isopropylmalate. It functions in the pathway amino-acid biosynthesis; L-leucine biosynthesis; L-leucine from 3-methyl-2-oxobutanoate: step 2/4. Its function is as follows. Catalyzes the isomerization between 2-isopropylmalate and 3-isopropylmalate, via the formation of 2-isopropylmaleate. This chain is 3-isopropylmalate dehydratase large subunit, found in Campylobacter jejuni subsp. jejuni serotype O:23/36 (strain 81-176).